The sequence spans 219 residues: ATP phosphoribosyltransferase (219 aa).

The protein belongs to the ATP phosphoribosyltransferase family. Short subfamily. In terms of assembly, heteromultimer composed of HisG and HisZ subunits.

It localises to the cytoplasm. It catalyses the reaction 1-(5-phospho-beta-D-ribosyl)-ATP + diphosphate = 5-phospho-alpha-D-ribose 1-diphosphate + ATP. It functions in the pathway amino-acid biosynthesis; L-histidine biosynthesis; L-histidine from 5-phospho-alpha-D-ribose 1-diphosphate: step 1/9. Functionally, catalyzes the condensation of ATP and 5-phosphoribose 1-diphosphate to form N'-(5'-phosphoribosyl)-ATP (PR-ATP). Has a crucial role in the pathway because the rate of histidine biosynthesis seems to be controlled primarily by regulation of HisG enzymatic activity. The protein is ATP phosphoribosyltransferase of Paramagnetospirillum magneticum (strain ATCC 700264 / AMB-1) (Magnetospirillum magneticum).